Consider the following 425-residue polypeptide: Ribosomal protein uS12 methylthiotransferase RimO (425 aa).

Residues Lys-2–Lys-115 enclose the MTTase N-terminal domain. Residues Cys-11, Cys-47, Cys-78, Cys-142, Cys-146, and Cys-149 each coordinate [4Fe-4S] cluster. Residues Val-128 to Glu-357 form the Radical SAM core domain. A TRAM domain is found at Arg-360–Val-425.

This sequence belongs to the methylthiotransferase family. RimO subfamily. It depends on [4Fe-4S] cluster as a cofactor.

It localises to the cytoplasm. It carries out the reaction L-aspartate(89)-[ribosomal protein uS12]-hydrogen + (sulfur carrier)-SH + AH2 + 2 S-adenosyl-L-methionine = 3-methylsulfanyl-L-aspartate(89)-[ribosomal protein uS12]-hydrogen + (sulfur carrier)-H + 5'-deoxyadenosine + L-methionine + A + S-adenosyl-L-homocysteine + 2 H(+). Catalyzes the methylthiolation of an aspartic acid residue of ribosomal protein uS12. This is Ribosomal protein uS12 methylthiotransferase RimO from Thermodesulfovibrio yellowstonii (strain ATCC 51303 / DSM 11347 / YP87).